A 388-amino-acid polypeptide reads, in one-letter code: ATP phosphoribosyltransferase regulatory subunit (388 aa).

Belongs to the class-II aminoacyl-tRNA synthetase family. HisZ subfamily. Heteromultimer composed of HisG and HisZ subunits.

The protein resides in the cytoplasm. It functions in the pathway amino-acid biosynthesis; L-histidine biosynthesis; L-histidine from 5-phospho-alpha-D-ribose 1-diphosphate: step 1/9. In terms of biological role, required for the first step of histidine biosynthesis. May allow the feedback regulation of ATP phosphoribosyltransferase activity by histidine. This chain is ATP phosphoribosyltransferase regulatory subunit, found in Acinetobacter baumannii (strain SDF).